A 229-amino-acid chain; its full sequence is Heptaprenylglyceryl phosphate synthase (229 aa).

Lys12 is a sn-glycerol 1-phosphate binding site. Asp14 and Ser40 together coordinate Mg(2+). Sn-glycerol 1-phosphate is bound by residues 159-164, Gly189, and 209-210; these read YLEYSG and GN.

Belongs to the GGGP/HepGP synthase family. Group I subfamily. In terms of assembly, homodimer. The cofactor is Mg(2+).

It catalyses the reaction sn-glycerol 1-phosphate + all-trans-heptaprenyl diphosphate = 3-heptaprenyl-sn-glycero-1-phosphate + diphosphate. Its pathway is membrane lipid metabolism; glycerophospholipid metabolism. Functionally, prenyltransferase that catalyzes in vivo the transfer of the heptaprenyl moiety of heptaprenyl pyrophosphate (HepPP; 35 carbon atoms) to the C3 hydroxyl of sn-glycerol-1-phosphate (G1P), producing heptaprenylglyceryl phosphate (HepGP). This reaction is an ether-bond-formation step in the biosynthesis of archaea-type G1P-based membrane lipids found in Bacillales. This Bacillus cereus (strain ATCC 10987 / NRS 248) protein is Heptaprenylglyceryl phosphate synthase.